The primary structure comprises 153 residues: MNANPCEVCRFQNKQCVNNCMFALLFPSSDLEKFDVVNRIFGLETLTFYLKDLSPMERIDTTRTLYYEAKPCFLNPPKNPSKFLEALLNYPYQKAEEVSKTKKLLASYSRPCVVLALPAPKYTQSKSKPSVLRKRKRKTKSSDESAIRVVEDS.

The 102-residue stretch at 4-105 (NPCEVCRFQN…EEVSKTKKLL (102 aa)) folds into the LOB domain. The disordered stretch occupies residues 126-153 (KSKPSVLRKRKRKTKSSDESAIRVVEDS). A compositionally biased stretch (basic and acidic residues) spans 140-153 (KSSDESAIRVVEDS).

Belongs to the LOB domain-containing protein family.

In Arabidopsis thaliana (Mouse-ear cress), this protein is LOB domain-containing protein 26 (LBD26).